The chain runs to 120 residues: Crustacean hyperglycemic hormones 1 (120 aa).

Residues 1-24 (MIAFRAVWSALLASLLLLLLAPSA) form the signal peptide. Intrachain disulfides connect Cys-53–Cys-89, Cys-69–Cys-85, and Cys-72–Cys-98. The residue at position 118 (Val-118) is a Valine amide.

Belongs to the arthropod CHH/MIH/GIH/VIH hormone family. Produced by the medulla terminalis X-organ in the eyestalks and transported to the sinus gland where they are stored and released.

The protein localises to the secreted. Hormone found in the sinus gland of isopods and decapods which controls the blood sugar level. Has a secretagogue action over the amylase released from the midgut gland. May act as a stress hormone and may be involved in the control of molting and reproduction. This is Crustacean hyperglycemic hormones 1 from Penaeus japonicus (Kuruma prawn).